Reading from the N-terminus, the 189-residue chain is GTP cyclohydrolase 1 (189 aa).

Residues C78, H81, and C150 each contribute to the Zn(2+) site.

This sequence belongs to the GTP cyclohydrolase I family. Toroid-shaped homodecamer, composed of two pentamers of five dimers.

It catalyses the reaction GTP + H2O = 7,8-dihydroneopterin 3'-triphosphate + formate + H(+). It functions in the pathway cofactor biosynthesis; 7,8-dihydroneopterin triphosphate biosynthesis; 7,8-dihydroneopterin triphosphate from GTP: step 1/1. The polypeptide is GTP cyclohydrolase 1 (Listeria innocua serovar 6a (strain ATCC BAA-680 / CLIP 11262)).